The chain runs to 537 residues: Carboxypeptidase Y homolog A (537 aa).

Positions 1–17 (MRLSTSALVLGAASSAV) are cleaved as a signal peptide. A propeptide spanning residues 18–124 (AFDQKVLGDL…RLDNYNLRAK (107 aa)) is cleaved from the precursor. 5 disulfides stabilise this stretch: cysteine 178/cysteine 418, cysteine 312/cysteine 326, cysteine 336/cysteine 359, cysteine 343/cysteine 352, and cysteine 381/cysteine 388. A glycan (N-linked (GlcNAc...) asparagine) is linked at asparagine 209. The active site involves serine 265. Residue aspartate 457 is part of the active site. Asparagine 503 carries an N-linked (GlcNAc...) asparagine glycan. Histidine 514 is an active-site residue.

Belongs to the peptidase S10 family.

Its subcellular location is the vacuole. It carries out the reaction Release of a C-terminal amino acid with broad specificity.. Functionally, vacuolar carboxypeptidase involved in degradation of small peptides. Digests preferentially peptides containing an aliphatic or hydrophobic residue in P1' position, as well as methionine, leucine or phenylalanine in P1 position of ester substrate. This is Carboxypeptidase Y homolog A (CPYA) from Fusarium vanettenii (strain ATCC MYA-4622 / CBS 123669 / FGSC 9596 / NRRL 45880 / 77-13-4) (Fusarium solani subsp. pisi).